The following is a 454-amino-acid chain: UDP-N-acetylmuramoylalanine--D-glutamate ligase (454 aa).

115-121 (GTNGKTT) provides a ligand contact to ATP.

The protein belongs to the MurCDEF family.

The protein localises to the cytoplasm. It carries out the reaction UDP-N-acetyl-alpha-D-muramoyl-L-alanine + D-glutamate + ATP = UDP-N-acetyl-alpha-D-muramoyl-L-alanyl-D-glutamate + ADP + phosphate + H(+). It functions in the pathway cell wall biogenesis; peptidoglycan biosynthesis. Its function is as follows. Cell wall formation. Catalyzes the addition of glutamate to the nucleotide precursor UDP-N-acetylmuramoyl-L-alanine (UMA). This chain is UDP-N-acetylmuramoylalanine--D-glutamate ligase, found in Thermoanaerobacter pseudethanolicus (strain ATCC 33223 / 39E) (Clostridium thermohydrosulfuricum).